The chain runs to 301 residues: 2-methoxy-6-polyprenyl-1,4-benzoquinol methylase, mitochondrial (301 aa).

The transit peptide at 1 to 16 directs the protein to the mitochondrion; the sequence is MQTTRSTRLLSLARRF. The segment covering 20 to 31 has biased composition (polar residues); the sequence is RTASQSAQNSKG. Residues 20 to 44 form a disordered region; it reads RTASQSAQNSKGMASGAESISGKEK. Residues Thr-111, Asp-139, and 173–174 contribute to the S-adenosyl-L-methionine site; that span reads DA.

Belongs to the class I-like SAM-binding methyltransferase superfamily. MenG/UbiE family. In terms of assembly, component of a multi-subunit COQ enzyme complex.

The protein localises to the mitochondrion inner membrane. It carries out the reaction a 2-methoxy-6-(all-trans-polyprenyl)benzene-1,4-diol + S-adenosyl-L-methionine = a 5-methoxy-2-methyl-3-(all-trans-polyprenyl)benzene-1,4-diol + S-adenosyl-L-homocysteine + H(+). The protein operates within cofactor biosynthesis; ubiquinone biosynthesis. Functionally, methyltransferase required for the conversion of 2-polyprenyl-6-methoxy-1,4-benzoquinol (DDMQH2) to 2-polyprenyl-3-methyl-6-methoxy-1,4-benzoquinol (DMQH2). In Drosophila melanogaster (Fruit fly), this protein is 2-methoxy-6-polyprenyl-1,4-benzoquinol methylase, mitochondrial.